The sequence spans 360 residues: MTVLPDLLDFDPDAALALLGEWMAARGEPAYRAAQVFGRLWQRPVRSFDEMTELPKALREGLAGSFRITALELTTRQKSMDGTEKFLFRMHDGQLIETVAIPDGDRLTFCISSQAGCALQCAFCATGAMGFQRNLHPSEIAGQVRELRMLTPSIVPTNIVFMGMGEPLMNWKAVSPTLSLLNDPRALGIGARHITISTVGVLPGIVALAARPEQFRLAISIHAPSDALRRTLMPVNTKYPLADVIAAAREFDRRVTFEYVMLGGVNDQPEHAAQLAQLARDCRAFVNLIPLHPGGSMGFSPSTTPTINAFAKAIRARGVETAVRRSRGLDIAAACGQLRTERLGRRLPVAAQDHGEVHVA.

The active-site Proton acceptor is Glu97. The Radical SAM core domain occupies 103 to 330 (DGDRLTFCIS…TAVRRSRGLD (228 aa)). A disulfide bridge connects residues Cys110 and Cys335. Cys117, Cys121, and Cys124 together coordinate [4Fe-4S] cluster. Residues 165–166 (GE), Ser197, 220–222 (SIH), and His292 contribute to the S-adenosyl-L-methionine site. Cys335 acts as the S-methylcysteine intermediate in catalysis.

This sequence belongs to the radical SAM superfamily. RlmN family. [4Fe-4S] cluster is required as a cofactor.

It is found in the cytoplasm. The catalysed reaction is adenosine(2503) in 23S rRNA + 2 reduced [2Fe-2S]-[ferredoxin] + 2 S-adenosyl-L-methionine = 2-methyladenosine(2503) in 23S rRNA + 5'-deoxyadenosine + L-methionine + 2 oxidized [2Fe-2S]-[ferredoxin] + S-adenosyl-L-homocysteine. It carries out the reaction adenosine(37) in tRNA + 2 reduced [2Fe-2S]-[ferredoxin] + 2 S-adenosyl-L-methionine = 2-methyladenosine(37) in tRNA + 5'-deoxyadenosine + L-methionine + 2 oxidized [2Fe-2S]-[ferredoxin] + S-adenosyl-L-homocysteine. Its function is as follows. Specifically methylates position 2 of adenine 2503 in 23S rRNA and position 2 of adenine 37 in tRNAs. This is Probable dual-specificity RNA methyltransferase RlmN from Gemmatimonas aurantiaca (strain DSM 14586 / JCM 11422 / NBRC 100505 / T-27).